The primary structure comprises 376 residues: tRNA-specific 2-thiouridylase MnmA (376 aa).

ATP is bound by residues 16–23 (AMSGGVDS) and L42. C111 functions as the Nucleophile in the catalytic mechanism. An intrachain disulfide couples C111 to C210. An ATP-binding site is contributed by G135. An interaction with tRNA region spans residues 158–160 (KDQ). The active-site Cysteine persulfide intermediate is C210.

Belongs to the MnmA/TRMU family.

The protein localises to the cytoplasm. It catalyses the reaction S-sulfanyl-L-cysteinyl-[protein] + uridine(34) in tRNA + AH2 + ATP = 2-thiouridine(34) in tRNA + L-cysteinyl-[protein] + A + AMP + diphosphate + H(+). In terms of biological role, catalyzes the 2-thiolation of uridine at the wobble position (U34) of tRNA, leading to the formation of s(2)U34. In Streptomyces avermitilis (strain ATCC 31267 / DSM 46492 / JCM 5070 / NBRC 14893 / NCIMB 12804 / NRRL 8165 / MA-4680), this protein is tRNA-specific 2-thiouridylase MnmA.